The chain runs to 156 residues: Nucleoredoxin-like protein 2 (156 aa).

Positions 9-147 constitute a Thioredoxin domain; it reads HLVTCKGATV…LACFQDWVEA (139 aa).

It belongs to the nucleoredoxin family.

Functionally, may be involved in the maintenance of both the function and the viability of sensory neurons, including photoreceptors and olfactory neurons. This is Nucleoredoxin-like protein 2 (NXNL2) from Homo sapiens (Human).